Consider the following 161-residue polypeptide: Protein-export protein SecB (161 aa).

This sequence belongs to the SecB family. Homotetramer, a dimer of dimers. One homotetramer interacts with 1 SecA dimer.

It is found in the cytoplasm. In terms of biological role, one of the proteins required for the normal export of preproteins out of the cell cytoplasm. It is a molecular chaperone that binds to a subset of precursor proteins, maintaining them in a translocation-competent state. It also specifically binds to its receptor SecA. This chain is Protein-export protein SecB, found in Rhodopseudomonas palustris (strain BisA53).